We begin with the raw amino-acid sequence, 707 residues long: B-cell lymphoma 6 protein homolog (707 aa).

In terms of domain architecture, BTB spans 32-99; that stretch reads TDVVIVVSRE…MYTSRLNLRE (68 aa). The tract at residues 275 to 350 is disordered; sequence HYSVPEGPKP…QPNSPTESCS (76 aa). The segment covering 299 to 315 has biased composition (basic and acidic residues); the sequence is KASKEEERPSSEDEIAL. Positions 331–350 are enriched in polar residues; it reads SPQSPQKSDCQPNSPTESCS. Ser-334 is modified (phosphoserine). Residue Ser-344 is modified to Phosphoserine; by MAPK1. Position 362 is a phosphoserine (Ser-362). The tract at residues 377 to 380 is required for interaction with NuRD complex and for transcriptional repressor activity; it reads KKYK. Residue Lys-380 is modified to N6-acetyllysine; by EP300. Ser-405 carries the post-translational modification Phosphoserine. Residues 405-469 are disordered; sequence SPRAYPAPPA…RSSSESHSPL (65 aa). The span at 409–420 shows a compositional bias: pro residues; sequence YPAPPACQPPME. Over residues 425–452 the composition is skewed to polar residues; sequence DLQSPTKLSASGEDSTIPQASRLNNLVN. Residues 458-467 show a composition bias toward low complexity; that stretch reads SPRSSSESHS. 6 C2H2-type zinc fingers span residues 519–542, 547–569, 575–597, 603–625, 631–653, and 659–682; these read FFCN…LQTH, YKCD…KTVH, YRCN…TRIH, YKCE…VLIH, YPCE…LRIH, and YHCE…RQKH.

Homodimer. Interacts (via BTB domain) with the corepressors BCOR, NCOR1 and SMRT/NCOR2; the interactions are direct. Forms preferably ternary complexes with BCOR and SMRT/NCOR2 on target gene promoters but, on enhancer elements, interacts with SMRT/NCOR2 and HDAC3 to repress proximal gene expression. Interacts with histone deacetylases HDAC2, HDAC5 and HDAC9 (via the catalytic domain). Interacts with ZBTB7 and BCL6B. Interacts with SCF(FBXO11) complex; the interaction is independent of phosphorylation and promotes ubiquitination. Interacts (when phosphorylated) with PIN1; the interaction is required for BCL6 degradation upon genotoxic stress. Interacts with ZBTB17; inhibits ZBTB17 transcriptional activity. Interacts with CTBP1, autoinhibits its transcriptional expression. Interacts with NOTCH1 NCID and SIRT1; leads to a epigenetic repression of selective NOTCH1-target genes. Interacts (nor via BTB domain neither acetylated) with the NuRD complex components CHD4, HDAC1, MBD3 and MTA3; the interaction with MTA3 inhibits BCL6 acetylation and is required for BCL6 transpriptional repression. Post-translationally, phosphorylated by MAPK1 in response to antigen receptor activation at Ser-334 and Ser-344. Phosphorylated by ATM in response to genotoxic stress. Phosphorylation induces its degradation by ubiquitin/proteasome pathway. Polyubiquitinated. Polyubiquitinated by SCF(FBXO11), leading to its degradation by the proteasome. Ubiquitinated by the SCF(FBXL17) complex, leading to its degradation by the proteasome: ubiquitination by the SCF(FBXL17) complex takes place when aberrant BTB domain dimers are formed. In terms of processing, acetylated at Lys-380 by EP300 which inhibits the interaction with NuRD complex and the transcriptional repressor function. Deacetylated by HDAC- and SIR2-dependent pathways. As to expression, expressed at least in germinal center B-cells of spleen.

The protein resides in the nucleus. Functionally, transcriptional repressor mainly required for germinal center (GC) formation and antibody affinity maturation which has different mechanisms of action specific to the lineage and biological functions. Forms complexes with different corepressors and histone deacetylases to repress the transcriptional expression of different subsets of target genes. Represses its target genes by binding directly to the DNA sequence 5'-TTCCTAGAA-3' (BCL6-binding site) or indirectly by repressing the transcriptional activity of transcription factors. In GC B-cells, represses genes that function in differentiation, inflammation, apoptosis and cell cycle control, also autoregulates its transcriptional expression and up-regulates, indirectly, the expression of some genes important for GC reactions, such as AICDA, through the repression of microRNAs expression, like miR155. An important function is to allow GC B-cells to proliferate very rapidly in response to T-cell dependent antigens and tolerate the physiological DNA breaks required for immunglobulin class switch recombination and somatic hypermutation without inducing a p53/TP53-dependent apoptotic response. In follicular helper CD4(+) T-cells (T(FH) cells), promotes the expression of T(FH)-related genes but inhibits the differentiation of T(H)1, T(H)2 and T(H)17 cells. Also required for the establishment and maintenance of immunological memory for both T- and B-cells. Suppresses macrophage proliferation through competition with STAT5 for STAT-binding motifs binding on certain target genes, such as CCL2 and CCND2. In response to genotoxic stress, controls cell cycle arrest in GC B-cells in both p53/TP53-dependedent and -independent manners. Besides, also controls neurogenesis through the alteration of the composition of NOTCH-dependent transcriptional complexes at selective NOTCH targets, such as HES5, including the recruitment of the deacetylase SIRT1 and resulting in an epigenetic silencing leading to neuronal differentiation. This chain is B-cell lymphoma 6 protein homolog (Bcl6), found in Mus musculus (Mouse).